The following is a 415-amino-acid chain: Dynein assembly factor with WD repeat domains 1 (415 aa).

WD repeat units follow at residues A90–T129, G132–R174, G175–T214, G217–I256, G259–T298, G301–K340, G343–E384, and H386–R415.

It belongs to the WD repeat WDR69 family. As to quaternary structure, interacts with IFT46.

Its subcellular location is the cytoplasm. The protein localises to the cytoskeleton. It is found in the flagellum basal body. The protein resides in the flagellum axoneme. Functionally, required for axonemal dynein assembly and ciliary motility in ciliated organs, including Kupffer's vesicle, during embryogenesis. Facilitates the onset of robust cilia motility during development. The chain is Dynein assembly factor with WD repeat domains 1 from Homo sapiens (Human).